We begin with the raw amino-acid sequence, 626 residues long: Putative L-type lectin-domain containing receptor kinase V.8 (626 aa).

The N-terminal stretch at 1 to 21 (MPSELKVLHIVLVLLYTLSSS) is a signal peptide. The tract at residues 22–212 (TYNSNGNWTL…SIGAFHYMLS (191 aa)) is legume-lectin like. Residues 22–245 (TYNSNGNWTL…PKKSSDRTKK (224 aa)) are Extracellular-facing. N-linked (GlcNAc...) asparagine glycosylation is found at Asn-28, Asn-59, Asn-112, and Asn-162. The chain crosses the membrane as a helical span at residues 246–266 (ILAVCLTLAVFAVFVASGICF). Residues 267–626 (VFYTRHKKVK…LTNSFLSHGR (360 aa)) lie on the Cytoplasmic side of the membrane. The Protein kinase domain maps to 303 to 562 (FKEKQLLGKG…GLLCAHHTEL (260 aa)). ATP-binding positions include 309–317 (LGKGGFGQV) and Lys-332. Asp-429 (proton acceptor) is an active-site residue.

In the C-terminal section; belongs to the protein kinase superfamily. Ser/Thr protein kinase family. It in the N-terminal section; belongs to the leguminous lectin family.

The protein localises to the cell membrane. It catalyses the reaction L-seryl-[protein] + ATP = O-phospho-L-seryl-[protein] + ADP + H(+). The enzyme catalyses L-threonyl-[protein] + ATP = O-phospho-L-threonyl-[protein] + ADP + H(+). This chain is Putative L-type lectin-domain containing receptor kinase V.8 (LECRK58), found in Arabidopsis thaliana (Mouse-ear cress).